A 488-amino-acid chain; its full sequence is Katanin p60 ATPase-containing subunit A-like 1 (488 aa).

The tract at residues 84–184 (FPNPVPEEGP…EQKKFDGTGY (101 aa)) is disordered. Over residues 144–167 (KPDRPNTRDGRGNKAKEEKSKRNA) the composition is skewed to basic and acidic residues. 246 to 253 (GPPGTGKT) serves as a coordination point for ATP.

This sequence belongs to the AAA ATPase family. Katanin p60 subunit A1 subfamily. A-like 1 sub-subfamily.

The protein resides in the cytoplasm. The protein localises to the cytoskeleton. Its subcellular location is the spindle pole. It is found in the spindle. The enzyme catalyses n ATP + n H2O + a microtubule = n ADP + n phosphate + (n+1) alpha/beta tubulin heterodimers.. In terms of biological role, regulates microtubule dynamics in Sertoli cells, a process that is essential for spermiogenesis and male fertility. Severs microtubules in an ATP-dependent manner, promoting rapid reorganization of cellular microtubule arrays. This is Katanin p60 ATPase-containing subunit A-like 1 (katnal1) from Danio rerio (Zebrafish).